The following is a 105-amino-acid chain: Sec-independent protein translocase protein TatA (105 aa).

The chain crosses the membrane as a helical span at residues 1–21 (MSLGPWEIGIIVLLIIVLFGA). Basic and acidic residues predominate over residues 41-50 (EVKEMNKDGD). The segment at 41 to 105 (EVKEMNKDGD…QNYEDPNRTS (65 aa)) is disordered. Over residues 52–92 (PEQQQQPQQQIAPNQIEAPQPNFEQHYQGQQVQQPQNPQTP) the composition is skewed to low complexity. Residues 96–105 (QNYEDPNRTS) are compositionally biased toward basic and acidic residues.

The protein belongs to the TatA/E family. In terms of assembly, the Tat system comprises two distinct complexes: a TatABC complex, containing multiple copies of TatA, TatB and TatC subunits, and a separate TatA complex, containing only TatA subunits. Substrates initially bind to the TatABC complex, which probably triggers association of the separate TatA complex to form the active translocon.

It localises to the cell membrane. Functionally, part of the twin-arginine translocation (Tat) system that transports large folded proteins containing a characteristic twin-arginine motif in their signal peptide across membranes. TatA could form the protein-conducting channel of the Tat system. The sequence is that of Sec-independent protein translocase protein TatA from Corynebacterium glutamicum (strain ATCC 13032 / DSM 20300 / JCM 1318 / BCRC 11384 / CCUG 27702 / LMG 3730 / NBRC 12168 / NCIMB 10025 / NRRL B-2784 / 534).